Consider the following 420-residue polypeptide: 3-phosphoshikimate 1-carboxyvinyltransferase (420 aa).

3-phosphoshikimate is bound by residues K20, S21, and R25. Residue K20 participates in phosphoenolpyruvate binding. Residues G90 and R118 each contribute to the phosphoenolpyruvate site. The 3-phosphoshikimate site is built by S159, S160, Q161, S187, D303, and K330. Q161 provides a ligand contact to phosphoenolpyruvate. D303 functions as the Proton acceptor in the catalytic mechanism. Residues R334, R376, and K402 each coordinate phosphoenolpyruvate.

The protein belongs to the EPSP synthase family. Monomer.

The protein localises to the cytoplasm. The enzyme catalyses 3-phosphoshikimate + phosphoenolpyruvate = 5-O-(1-carboxyvinyl)-3-phosphoshikimate + phosphate. The protein operates within metabolic intermediate biosynthesis; chorismate biosynthesis; chorismate from D-erythrose 4-phosphate and phosphoenolpyruvate: step 6/7. Its function is as follows. Catalyzes the transfer of the enolpyruvyl moiety of phosphoenolpyruvate (PEP) to the 5-hydroxyl of shikimate-3-phosphate (S3P) to produce enolpyruvyl shikimate-3-phosphate and inorganic phosphate. This chain is 3-phosphoshikimate 1-carboxyvinyltransferase, found in Brachyspira hyodysenteriae (strain ATCC 49526 / WA1).